We begin with the raw amino-acid sequence, 444 residues long: Ribosomal protein uS12 methylthiotransferase RimO (444 aa).

The MTTase N-terminal domain occupies 4–118 (YKIGLISLGC…IQNYIDDFFN (115 aa)). Residues cysteine 13, cysteine 48, cysteine 81, cysteine 155, cysteine 159, and cysteine 162 each coordinate [4Fe-4S] cluster. In terms of domain architecture, Radical SAM core spans 141–371 (TTAKHMAYIR…MSIQQNVSSK (231 aa)). Positions 374–440 (KNKLEKVYKV…EYDLIGVVCD (67 aa)) constitute a TRAM domain.

The protein belongs to the methylthiotransferase family. RimO subfamily. [4Fe-4S] cluster serves as cofactor.

The protein localises to the cytoplasm. The enzyme catalyses L-aspartate(89)-[ribosomal protein uS12]-hydrogen + (sulfur carrier)-SH + AH2 + 2 S-adenosyl-L-methionine = 3-methylsulfanyl-L-aspartate(89)-[ribosomal protein uS12]-hydrogen + (sulfur carrier)-H + 5'-deoxyadenosine + L-methionine + A + S-adenosyl-L-homocysteine + 2 H(+). Its function is as follows. Catalyzes the methylthiolation of an aspartic acid residue of ribosomal protein uS12. The sequence is that of Ribosomal protein uS12 methylthiotransferase RimO from Clostridium novyi (strain NT).